A 263-amino-acid chain; its full sequence is Indole-3-glycerol phosphate synthase (263 aa).

It belongs to the TrpC family.

The catalysed reaction is 1-(2-carboxyphenylamino)-1-deoxy-D-ribulose 5-phosphate + H(+) = (1S,2R)-1-C-(indol-3-yl)glycerol 3-phosphate + CO2 + H2O. It functions in the pathway amino-acid biosynthesis; L-tryptophan biosynthesis; L-tryptophan from chorismate: step 4/5. The chain is Indole-3-glycerol phosphate synthase from Acidithiobacillus ferrooxidans (strain ATCC 23270 / DSM 14882 / CIP 104768 / NCIMB 8455) (Ferrobacillus ferrooxidans (strain ATCC 23270)).